The sequence spans 164 residues: MKSVITTTISAADAAGRFPSSSDLESVQGNIQRAAARLEAAEKLASNHEAVVKEAGDACFAKYSYLKNPGEAGDSQEKVNKCYRDVDHYMRLVNYCLVVGGTGPVDEWGIAGAREVYRTLNLPTSAYVASFAFARDRLCVPRDMSAQAGVEYAGNLDYLINALS.

Residues C82 and C139 each coordinate (2R,3E)-phycoerythrobilin.

Belongs to the phycobiliprotein family. Heterodimer of an alpha and a beta chain. Post-translationally, contains two covalently linked bilin chromophores.

It is found in the plastid. It localises to the chloroplast thylakoid membrane. Light-harvesting photosynthetic bile pigment-protein from the phycobiliprotein complex. The polypeptide is R-phycoerythrin alpha chain (cpeA) (Pyropia tenera (Nori)).